A 536-amino-acid chain; its full sequence is Cytochrome P450 monooxygenase macC (536 aa).

Residues 2–22 traverse the membrane as a helical segment; sequence ALLYITTAALALLLLFLRAVF. Heme is bound at residue C448.

This sequence belongs to the cytochrome P450 family. The cofactor is heme.

Its subcellular location is the membrane. The protein operates within secondary metabolite biosynthesis; terpenoid biosynthesis. In terms of biological role, cytochrome P450 monooxygenase; part of the gene cluster that mediates the biosynthesis of macrophorins, isoprenoid epoxycyclohexenones containing cyclized drimane moieties. The first step of the pathway is the synthesis of 6-methylsalicylic acid (6-MSA) by the polyketide synthase macA. 6-MSA is then converted to m-cresol by the decarboxylase macB. The cytochrome P450 monooxygenase macC then catalyzes the oxidation of m-cresol to toluquinol. Epoxidation of toluquinol is then performed by the short chain dehydrogenase macD, with the help of macE, and a further prenylation by macG leads to 7-deacetoxyyanuthone A. The next step is the hydroxylation of C-22 of 7-deacetoxyyanuthone A by the cytochrome P450 monooxygenase macH to yield 22-deacetylyanuthone A. O-Mevalon transferase macI then attaches mevalon to the hydroxyl group of 22-deacetylyanuthone A to produce yanuthone E. The terpene cyclase macJ catalyzes the cyclization of 22-deacetylyanuthone A to macrophorin A. MacJ is also able to catalyze cyclization of yanuthone E and 7-deacetoxyyanuthone A to their corresponding macrophorins. The macJ products can be further modified by macH and macJ, as well as by the FAD-dependent monooxygenase macF, to produce additional macrophorins, including 4'-oxomacrophorin A, 4'-oxomacrophorin D and 4'-oxomacrophorin E. This Penicillium terrestre protein is Cytochrome P450 monooxygenase macC.